Reading from the N-terminus, the 434-residue chain is Evolutionarily conserved signaling intermediate in Toll pathway, mitochondrial (434 aa).

A mitochondrion-targeting transit peptide spans 1–48 (MSWVQVNLLARGLSRGWGSICRTVLSGTPFAQPSLQARGLHCSAVTHK). A Glycyl lysine isopeptide (Lys-Gly) (interchain with G-Cter in ubiquitin) cross-link involves residue lysine 371. Residues 403–434 (TRLEGQSPPHSPPKGPEEDDEAIQAQQRQGQS) are disordered.

Belongs to the ECSIT family. Interacts with MAP3K1, SMAD4 and TRAF6. Interacts with SMAD1 only after BMP4-treatment. Part of the mitochondrial complex I assembly/MCIA complex that comprises at least the core subunits TMEM126B, NDUFAF1, ECSIT and ACAD9 and complement subunits such as COA1 and TMEM186. Interacts with NDUFAF1. Interacts with ACAD9. Interacts with TRIM59. Interacts with TMEM70 and TMEM242. Interacts (when ubiquitinated) with NF-kappa-B subunits RELA and NFKB1. Interacts with RIGI, IFIT1 and MAVS; these interactions promote RLR-mediated type I IFN induction. Interacts with SQSTM1; this interaction inhibits TLR4 signaling via functional regulation of the TRAF6-ECSIT complex. Interacts with cereblon/CRBN; this interaction inhibits the ubiquitination of ECSIT. Ubiquitinated on Lys-371; leading to translocation in the nucleus together with RELA and NFKB1 and expression of NF-kappa-B-dependent genes.

It is found in the cytoplasm. It localises to the nucleus. The protein localises to the mitochondrion. Functionally, adapter protein that plays a role in different signaling pathways including TLRs and IL-1 pathways or innate antiviral induction signaling. Plays a role in the activation of NF-kappa-B by forming a signal complex with TRAF6 and TAK1/MAP3K7 to activate TAK1/MAP3K7 leading to activation of IKKs. Once ubiquitinated, interacts with the dissociated RELA and NFKB1 proteins and translocates to the nucleus where it induces NF-kappa-B-dependent gene expression. Plays a role in innate antiviral immune response by bridging the pattern recognition receptors RIGI and MDA5/IFIT1 to the MAVS complex at the mitochondrion. Promotes proteolytic activation of MAP3K1. Involved in the BMP signaling pathway. Required for normal embryonic development. Its function is as follows. As part of the MCIA complex, involved in the assembly of the mitochondrial complex I. In Rattus norvegicus (Rat), this protein is Evolutionarily conserved signaling intermediate in Toll pathway, mitochondrial.